The primary structure comprises 240 residues: Uridylate kinase (240 aa).

13 to 16 (KASG) is a binding site for ATP. Residues 21–26 (GSQGFG) form an involved in allosteric activation by GTP region. UMP is bound at residue G55. 2 residues coordinate ATP: G56 and R60. Residues D75 and 136–143 (TGNPFFTT) contribute to the UMP site. The ATP site is built by T163, Q164, Y169, and D172.

It belongs to the UMP kinase family. In terms of assembly, homohexamer.

Its subcellular location is the cytoplasm. It catalyses the reaction UMP + ATP = UDP + ADP. Its pathway is pyrimidine metabolism; CTP biosynthesis via de novo pathway; UDP from UMP (UMPK route): step 1/1. Allosterically activated by GTP. Inhibited by UTP. In terms of biological role, catalyzes the reversible phosphorylation of UMP to UDP. The sequence is that of Uridylate kinase from Brucella anthropi (strain ATCC 49188 / DSM 6882 / CCUG 24695 / JCM 21032 / LMG 3331 / NBRC 15819 / NCTC 12168 / Alc 37) (Ochrobactrum anthropi).